A 259-amino-acid chain; its full sequence is Hydroxyacylglutathione hydrolase (259 aa).

Residues His56, His58, Asp60, His61, His112, Asp133, and His171 each contribute to the Zn(2+) site.

Belongs to the metallo-beta-lactamase superfamily. Glyoxalase II family. Monomer. It depends on Zn(2+) as a cofactor.

It catalyses the reaction an S-(2-hydroxyacyl)glutathione + H2O = a 2-hydroxy carboxylate + glutathione + H(+). It functions in the pathway secondary metabolite metabolism; methylglyoxal degradation; (R)-lactate from methylglyoxal: step 2/2. Thiolesterase that catalyzes the hydrolysis of S-D-lactoyl-glutathione to form glutathione and D-lactic acid. The protein is Hydroxyacylglutathione hydrolase of Pseudomonas putida (strain W619).